The primary structure comprises 98 residues: Small ribosomal subunit protein uS19 (98 aa).

The segment at T77–K98 is disordered.

It belongs to the universal ribosomal protein uS19 family.

In terms of biological role, protein S19 forms a complex with S13 that binds strongly to the 16S ribosomal RNA. This is Small ribosomal subunit protein uS19 from Prosthecochloris aestuarii (strain DSM 271 / SK 413).